A 62-amino-acid polypeptide reads, in one-letter code: Large ribosomal subunit protein bL33 (62 aa).

It belongs to the bacterial ribosomal protein bL33 family.

The polypeptide is Large ribosomal subunit protein bL33 (Phocaeicola vulgatus (strain ATCC 8482 / DSM 1447 / JCM 5826 / CCUG 4940 / NBRC 14291 / NCTC 11154) (Bacteroides vulgatus)).